Here is a 404-residue protein sequence, read N- to C-terminus: MKMTQTVKKVVVAYSGGLDTSVILPWLQENYDNCEIVAFVADVGQGAEELEGIEAKALASGASECYVVDLKDELVENYIYPTLKTGAVYEGTYLLGTSMARPIIAKAQVEIARKVGADALCHGCTGKGNDQIRFESCFAALAPELTVIAPWRIWDLTSRESLLEYLAERDIPTAASATKIYSRDANAWHISHEGGELEDPWNQPSKQVWTMTVDPIDAPNEPEFLTISVVKGEITAVNGEAMSPYNTLMYLNEKAAAHGVGRVDIVENRLVGMKSRGCYETPGGTVMVEALRGIEELVLDKTTRKWKQTVAAEFSHLVYDGRWFTPLCASLLAAAGTLAEEMNGEVIVKMYKGSVQAIQKKSPNSLYSEEFATFGDDNVYDQSHAEGFIRLYSLSSRIKALASK.

ATP contacts are provided by residues 13-21 (AYSGGLDTS) and Ala-41. L-citrulline-binding residues include Tyr-93 and Ser-98. Gly-123 is a binding site for ATP. Residues Thr-125, Asn-129, and Asp-130 each coordinate L-aspartate. Position 129 (Asn-129) interacts with L-citrulline. L-citrulline contacts are provided by Arg-133, Ser-182, Ser-191, Glu-267, and Tyr-279.

Belongs to the argininosuccinate synthase family. Type 1 subfamily. Homotetramer.

The protein localises to the cytoplasm. It carries out the reaction L-citrulline + L-aspartate + ATP = 2-(N(omega)-L-arginino)succinate + AMP + diphosphate + H(+). The protein operates within amino-acid biosynthesis; L-arginine biosynthesis; L-arginine from L-ornithine and carbamoyl phosphate: step 2/3. This is Argininosuccinate synthase from Moritella profunda.